Consider the following 139-residue polypeptide: Proline-rich protein 13 (139 aa).

The segment at 1-139 is disordered; the sequence is MWNPSAGPNP…SSSSSSSDSD (139 aa). Pro residues-rich tracts occupy residues 24–62 and 70–91; these read ACPPSQNPAFPPGPCPPGIPQGNPAFPPCRPPYPVPQPG and GPYPPPYPPAAPGMCPVNPPAP. A compositionally biased stretch (basic residues) spans 103 to 124; it reads KTRKKMKKAHKKSHKHHKHGKH. Over residues 125–139 the composition is skewed to low complexity; the sequence is SSSSSSSSSSSSDSD.

It localises to the nucleus. Its function is as follows. Negatively regulates TSP1 expression at the level of transcription. This down-regulation was shown to reduce taxane-induced apoptosis. This Rattus norvegicus (Rat) protein is Proline-rich protein 13 (Prr13).